Here is a 254-residue protein sequence, read N- to C-terminus: MKTVDLNCDMGESFGAYQLGNDQEILSYITSANVACGFHAGDPATMRKTVQMALKAGVAIGAHPGFADLVGFGRRNMEISPEEAYDLVVYQIGALQAFVRAEGGVMHHVKPHGALYNMAATRPALAESIALAIYKVNPELVLYGLAGSELTRAGEKIGLITAHEVFADRTYQQDGTLTPRSQPNAIISDQQQSLQQVIRMVSDGRVLTQQGVDIPIRADSICIHGDGAHALAFAQSIREALSGAGITIAARFAR.

This sequence belongs to the LamB/PxpA family. As to quaternary structure, forms a complex composed of PxpA, PxpB and PxpC.

It carries out the reaction 5-oxo-L-proline + ATP + 2 H2O = L-glutamate + ADP + phosphate + H(+). Catalyzes the cleavage of 5-oxoproline to form L-glutamate coupled to the hydrolysis of ATP to ADP and inorganic phosphate. The chain is 5-oxoprolinase subunit A from Brevibacillus brevis (strain 47 / JCM 6285 / NBRC 100599).